The sequence spans 194 residues: dTTP/UTP pyrophosphatase (194 aa).

Asp73 (proton acceptor) is an active-site residue.

It belongs to the Maf family. YhdE subfamily. A divalent metal cation serves as cofactor.

The protein localises to the cytoplasm. It carries out the reaction dTTP + H2O = dTMP + diphosphate + H(+). The catalysed reaction is UTP + H2O = UMP + diphosphate + H(+). Its function is as follows. Nucleoside triphosphate pyrophosphatase that hydrolyzes dTTP and UTP. May have a dual role in cell division arrest and in preventing the incorporation of modified nucleotides into cellular nucleic acids. The polypeptide is dTTP/UTP pyrophosphatase (Geotalea uraniireducens (strain Rf4) (Geobacter uraniireducens)).